Consider the following 586-residue polypeptide: UvrABC system protein C (586 aa).

In terms of domain architecture, GIY-YIG spans 17–94 (HKPGCYLWKD…IKQYKPRFNL (78 aa)). Residues 201–236 (EQVLNHLQQQEIKASEQQNFEAARHFLDLQKAVLEL) form the UVR domain.

The protein belongs to the UvrC family. As to quaternary structure, interacts with UvrB in an incision complex.

It localises to the cytoplasm. Functionally, the UvrABC repair system catalyzes the recognition and processing of DNA lesions. UvrC both incises the 5' and 3' sides of the lesion. The N-terminal half is responsible for the 3' incision and the C-terminal half is responsible for the 5' incision. This chain is UvrABC system protein C, found in Mycoplasma pneumoniae (strain ATCC 29342 / M129 / Subtype 1) (Mycoplasmoides pneumoniae).